The following is an 89-amino-acid chain: Small ribosomal subunit protein uS15 (89 aa).

It belongs to the universal ribosomal protein uS15 family. In terms of assembly, part of the 30S ribosomal subunit. Forms a bridge to the 50S subunit in the 70S ribosome, contacting the 23S rRNA.

Functionally, one of the primary rRNA binding proteins, it binds directly to 16S rRNA where it helps nucleate assembly of the platform of the 30S subunit by binding and bridging several RNA helices of the 16S rRNA. In terms of biological role, forms an intersubunit bridge (bridge B4) with the 23S rRNA of the 50S subunit in the ribosome. The chain is Small ribosomal subunit protein uS15 from Exiguobacterium sp. (strain ATCC BAA-1283 / AT1b).